The primary structure comprises 343 residues: Dihydroorotate dehydrogenase (quinone) (343 aa).

Residues 61 to 65 (AGLDK) and Thr85 each bind FMN. Lys65 provides a ligand contact to substrate. Position 110–114 (110–114 (NRMGF)) interacts with substrate. FMN-binding residues include Asn138 and Asn171. Residue Asn171 coordinates substrate. Ser174 serves as the catalytic Nucleophile. Residue Asn176 participates in substrate binding. FMN contacts are provided by Lys216 and Thr244. Residue 245 to 246 (NT) participates in substrate binding. Residues Gly267, Gly296, and 317 to 318 (YS) each bind FMN.

It belongs to the dihydroorotate dehydrogenase family. Type 2 subfamily. As to quaternary structure, monomer. FMN serves as cofactor.

Its subcellular location is the cell membrane. The enzyme catalyses (S)-dihydroorotate + a quinone = orotate + a quinol. The protein operates within pyrimidine metabolism; UMP biosynthesis via de novo pathway; orotate from (S)-dihydroorotate (quinone route): step 1/1. Functionally, catalyzes the conversion of dihydroorotate to orotate with quinone as electron acceptor. The polypeptide is Dihydroorotate dehydrogenase (quinone) (Pseudomonas savastanoi pv. phaseolicola (strain 1448A / Race 6) (Pseudomonas syringae pv. phaseolicola (strain 1448A / Race 6))).